A 169-amino-acid chain; its full sequence is Putative antitoxin Rv0268c (169 aa).

Basic residues predominate over residues 1-11; the sequence is MGTRSKSRTRQ. Residues 1–35 form a disordered region; sequence MGTRSKSRTRQLKQSNGCTATTSGASDRRRRARRR. Residues 120-153 are a coiled coil; the sequence is AAILISAERYESLMEELEDLRDRLSVHEREHVTM.

This sequence belongs to the phD/YefM antitoxin family.

Functionally, putative antitoxin component of a type II toxin-antitoxin (TA) system; however the expected toxin coding sequence is not found adjacent to this gene. This chain is Putative antitoxin Rv0268c, found in Mycobacterium tuberculosis (strain ATCC 25618 / H37Rv).